The following is a 223-amino-acid chain: MEKRELVNIIDYTLLHPTANKADIESFLQEVVNYGFKTIFVQPYFVPFAVNWLADHDVNVGVPVGFSLGGATTHVKVEETKEAIRNGAKEIDMLVNLGALKSGDYQMVETDIAKVVEAANGLNTKVIIETALLNQEEKISVTECIIRAGADFVKTATGFNGGGATVEDVRLLNEIGKGKIQVKAAGGIKTYEDALAIIDAGATRIGSSGAIQIIRGETSTSSY.

Aspartate 92 functions as the Proton donor/acceptor in the catalytic mechanism. The active-site Schiff-base intermediate with acetaldehyde is the lysine 154. Lysine 183 (proton donor/acceptor) is an active-site residue.

This sequence belongs to the DeoC/FbaB aldolase family. DeoC type 1 subfamily.

It localises to the cytoplasm. It catalyses the reaction 2-deoxy-D-ribose 5-phosphate = D-glyceraldehyde 3-phosphate + acetaldehyde. It participates in carbohydrate degradation; 2-deoxy-D-ribose 1-phosphate degradation; D-glyceraldehyde 3-phosphate and acetaldehyde from 2-deoxy-alpha-D-ribose 1-phosphate: step 2/2. Functionally, catalyzes a reversible aldol reaction between acetaldehyde and D-glyceraldehyde 3-phosphate to generate 2-deoxy-D-ribose 5-phosphate. The sequence is that of Deoxyribose-phosphate aldolase 2 from Oceanobacillus iheyensis (strain DSM 14371 / CIP 107618 / JCM 11309 / KCTC 3954 / HTE831).